The primary structure comprises 217 residues: Ribosome maturation factor RimM (217 aa).

The PRC barrel domain occupies 115–186 (EDAWYDNQLV…TVTLTPPPGL (72 aa)). The disordered stretch occupies residues 181-217 (TPPPGLFEDLPDDAPAAGDESEPVSPPVTAEETPGGE).

This sequence belongs to the RimM family. In terms of assembly, binds ribosomal protein uS19.

It is found in the cytoplasm. An accessory protein needed during the final step in the assembly of 30S ribosomal subunit, possibly for assembly of the head region. Essential for efficient processing of 16S rRNA. May be needed both before and after RbfA during the maturation of 16S rRNA. It has affinity for free ribosomal 30S subunits but not for 70S ribosomes. The polypeptide is Ribosome maturation factor RimM (Leifsonia xyli subsp. xyli (strain CTCB07)).